Reading from the N-terminus, the 346-residue chain is [LysW]-lysine/[LysW]-ornithine hydrolase (346 aa).

A Zn(2+)-binding site is contributed by His68. Asp70 is an active-site residue. Asp92 is a binding site for Zn(2+). Catalysis depends on Glu122, which acts as the Proton acceptor. Residues Glu123, Glu146, and His317 each coordinate Zn(2+).

Belongs to the peptidase M20A family. LysK subfamily. The cofactor is Zn(2+). Co(2+) is required as a cofactor.

The protein resides in the cytoplasm. It carries out the reaction [amino-group carrier protein]-C-terminal-gamma-(L-lysyl)-L-glutamate + H2O = [amino-group carrier protein]-C-terminal-L-glutamate + L-lysine. It catalyses the reaction [amino-group carrier protein]-C-terminal-gamma-(L-ornithyl)-L-glutamate + H2O = [amino-group carrier protein]-C-terminal-L-glutamate + L-ornithine. Its pathway is amino-acid biosynthesis; L-lysine biosynthesis via AAA pathway; L-lysine from L-alpha-aminoadipate (Thermus route): step 5/5. The protein operates within amino-acid biosynthesis; L-arginine biosynthesis. Catalyzes the release of L-lysine from [LysW]-gamma-L-lysine and the release of L-ornithine from [LysW]-L-ornithine. This Saccharolobus islandicus (strain M.16.27) (Sulfolobus islandicus) protein is [LysW]-lysine/[LysW]-ornithine hydrolase.